The sequence spans 411 residues: tRNA (uracil(54)-C(5))-methyltransferase (411 aa).

[4Fe-4S] cluster-binding residues include C62, C68, C71, and C138. S-adenosyl-L-methionine is bound by residues Q254, Y280, T285, 301 to 302 (DS), D328, and D342. The active-site Nucleophile is C369. E402 (proton acceptor) is an active-site residue.

The protein belongs to the class I-like SAM-binding methyltransferase superfamily. RNA M5U methyltransferase family.

It catalyses the reaction uridine(54) in tRNA + S-adenosyl-L-methionine = 5-methyluridine(54) in tRNA + S-adenosyl-L-homocysteine + H(+). Functionally, catalyzes the formation of 5-methyl-uridine at position 54 (m5U54) in tRNA. This Pyrococcus furiosus (strain ATCC 43587 / DSM 3638 / JCM 8422 / Vc1) protein is tRNA (uracil(54)-C(5))-methyltransferase.